We begin with the raw amino-acid sequence, 487 residues long: Glutamyl-tRNA(Gln) amidotransferase subunit A (487 aa).

Active-site charge relay system residues include Lys-76 and Ser-151. Residue Ser-175 is the Acyl-ester intermediate of the active site.

Belongs to the amidase family. GatA subfamily. Heterotrimer of A, B and C subunits.

The enzyme catalyses L-glutamyl-tRNA(Gln) + L-glutamine + ATP + H2O = L-glutaminyl-tRNA(Gln) + L-glutamate + ADP + phosphate + H(+). Functionally, allows the formation of correctly charged Gln-tRNA(Gln) through the transamidation of misacylated Glu-tRNA(Gln) in organisms which lack glutaminyl-tRNA synthetase. The reaction takes place in the presence of glutamine and ATP through an activated gamma-phospho-Glu-tRNA(Gln). The chain is Glutamyl-tRNA(Gln) amidotransferase subunit A from Azoarcus sp. (strain BH72).